The primary structure comprises 339 residues: Glutamyl-tRNA reductase (339 aa).

Residues 50–53, Ser-102, 107–109, and Gln-113 contribute to the substrate site; these read TCHR and ETE. Cys-51 acts as the Nucleophile in catalysis. Position 181-186 (181-186) interacts with NADP(+); the sequence is GYSDIN.

The protein belongs to the glutamyl-tRNA reductase family. As to quaternary structure, homodimer.

It carries out the reaction (S)-4-amino-5-oxopentanoate + tRNA(Glu) + NADP(+) = L-glutamyl-tRNA(Glu) + NADPH + H(+). The protein operates within porphyrin-containing compound metabolism; protoporphyrin-IX biosynthesis; 5-aminolevulinate from L-glutamyl-tRNA(Glu): step 1/2. Its function is as follows. Catalyzes the NADPH-dependent reduction of glutamyl-tRNA(Glu) to glutamate 1-semialdehyde (GSA). This is Glutamyl-tRNA reductase from Chlamydia pneumoniae (Chlamydophila pneumoniae).